We begin with the raw amino-acid sequence, 197 residues long: Transposon Tn10 TetC protein (197 aa).

The HTH tetR-type domain maps to 12–72; sequence KSTYQSLVNS…ACYKQQLIMI (61 aa). The segment at residues 35-54 is a DNA-binding region (H-T-H motif); it reads SIDEISGKALVTKGAFYHHF.

In Escherichia coli, this protein is Transposon Tn10 TetC protein (tetC).